Here is a 586-residue protein sequence, read N- to C-terminus: 2-succinyl-5-enolpyruvyl-6-hydroxy-3-cyclohexene-1-carboxylate synthase (586 aa).

It belongs to the TPP enzyme family. MenD subfamily. As to quaternary structure, homodimer. Mg(2+) serves as cofactor. Requires Mn(2+) as cofactor. Thiamine diphosphate is required as a cofactor.

The catalysed reaction is isochorismate + 2-oxoglutarate + H(+) = 5-enolpyruvoyl-6-hydroxy-2-succinyl-cyclohex-3-ene-1-carboxylate + CO2. It participates in quinol/quinone metabolism; 1,4-dihydroxy-2-naphthoate biosynthesis; 1,4-dihydroxy-2-naphthoate from chorismate: step 2/7. Its pathway is cofactor biosynthesis; phylloquinone biosynthesis. Catalyzes the thiamine diphosphate-dependent decarboxylation of 2-oxoglutarate and the subsequent addition of the resulting succinic semialdehyde-thiamine pyrophosphate anion to isochorismate to yield 2-succinyl-5-enolpyruvyl-6-hydroxy-3-cyclohexene-1-carboxylate (SEPHCHC). In Acaryochloris marina (strain MBIC 11017), this protein is 2-succinyl-5-enolpyruvyl-6-hydroxy-3-cyclohexene-1-carboxylate synthase.